Consider the following 341-residue polypeptide: Geranylfarnesyl diphosphate synthase (341 aa).

Residues Lys47, Arg50, and Gln95 each coordinate isopentenyl diphosphate. Mg(2+)-binding residues include Asp102 and Asp106. Arg111 contacts an all-trans-polyprenyl diphosphate. Arg112 lines the isopentenyl diphosphate pocket. Positions 193, 194, and 231 each coordinate an all-trans-polyprenyl diphosphate.

Belongs to the FPP/GGPP synthase family. In terms of assembly, homodimer. Requires Mg(2+) as cofactor.

Its subcellular location is the cytoplasm. The catalysed reaction is isopentenyl diphosphate + (2E,6E,10E)-geranylgeranyl diphosphate = (2E,6E,10E,14E)-geranylfarnesyl diphosphate + diphosphate. Functionally, probably involved in biosynthesis of the precursor for C25 (sesterterpanyl chain) moiety of C20-C25 diether (2-O-sesterterpanyl-3-O-phytanyl-sn-glycer) membrane lipid. Catalyzes the condensation of isopentenyl pyrophosphate with the allylic pyrophosphates to yield geranylfarnesyl diphosphate (GFPP). Geranylgeranyl diphosphate (GGPP) is the preferred substrate, but dimethylallyl diphosphate (DMAPP) and farnesyl diphosphate (FPP) can also be used as allylic substrate. The sequence is that of Geranylfarnesyl diphosphate synthase (idsA3) from Natronomonas pharaonis (strain ATCC 35678 / DSM 2160 / CIP 103997 / JCM 8858 / NBRC 14720 / NCIMB 2260 / Gabara) (Halobacterium pharaonis).